Consider the following 534-residue polypeptide: MQRRDFIRNASLALAAFGLPSLPACAASKSGQMGLRRLGQPQPFDFATLKGQARALAQAPYKSHKRVLPGRLEGLDWDQYQSIGYRQDHALWADQPGKFQAKFFHLGLYFHSPVRMFDVVDGKAQELAYDGAAFNYGKSGIKDGELPADLGFAGFRLNTRKDTDRDFAAFLGASYFRAVGKEGQYGQSARGLAIDTGMGKPEEFPDFIAYYLEQPSADSETIVVYGLLDSPSVAGAYRFAITNGDVLLMDIDSALYPRKAIERLGIAPCTSMYQVGENDRRMAWDWRPEIHDTDGLSLWTGAGEWIWRPLLNPRNLRFNMFVDRNPRGFGLLQRDRNFDHYQDDGVFYEKRPCLWVEPKGEWGEGSVQLVEIPTVDETFDNIVAFWNPKEKPQPGQELLVGYRLYWGAEPPARPPLAHCVASRTGLGGVVGKKREYFSWRFAVDFEGGELARLIDKGEVEAVVEASRGRVEIVSARPLREINGYRAMFDLVPPEGSTEQIDIRLFLRSGGKTLTETWLYQYTPPPAGAPERTLY.

Residues 1-26 constitute a signal peptide (tat-type signal); that stretch reads MQRRDFIRNASLALAAFGLPSLPACA.

It belongs to the OpgD/OpgG family. Predicted to be exported by the Tat system. The position of the signal peptide cleavage has not been experimentally proven.

It is found in the periplasm. Its pathway is glycan metabolism; osmoregulated periplasmic glucan (OPG) biosynthesis. Probably involved in the control of the structural glucose backbone of osmoregulated periplasmic glucans (OPGs). This chain is Glucans biosynthesis protein D, found in Stenotrophomonas maltophilia (strain R551-3).